The following is a 258-amino-acid chain: 5'-nucleotidase SurE (258 aa).

Positions 10, 11, 41, and 96 each coordinate a divalent metal cation.

The protein belongs to the SurE nucleotidase family. A divalent metal cation is required as a cofactor.

It localises to the cytoplasm. It catalyses the reaction a ribonucleoside 5'-phosphate + H2O = a ribonucleoside + phosphate. Functionally, nucleotidase that shows phosphatase activity on nucleoside 5'-monophosphates. The chain is 5'-nucleotidase SurE from Sorangium cellulosum (strain So ce56) (Polyangium cellulosum (strain So ce56)).